The primary structure comprises 624 residues: Fibronectin type III domain-containing protein 2 (624 aa).

The first 19 residues, 1 to 19 (MREQFSVLVISLLFSSSYG), serve as a signal peptide directing secretion. 5 consecutive Fibronectin type-III domains span residues 131–236 (PPQN…TPDI), 240–330 (EPTN…TDVF), 334–430 (MPRF…TVPT), 431–524 (VPRE…PKRD), and 527–624 (VPPN…WPGR).

In terms of tissue distribution, prismatic layer of shell (at protein level).

It is found in the secreted. The chain is Fibronectin type III domain-containing protein 2 from Margaritifera margaritifera (Freshwater pearl mussel).